The sequence spans 395 residues: Flap endonuclease 1 (395 aa).

An N-domain region spans residues 1–104 (MGIKHLYQVI…GELAKRFMRK (104 aa)). Position 34 (aspartate 34) interacts with Mg(2+). 2 residues coordinate DNA: arginine 47 and arginine 70. Residues aspartate 86, glutamate 158, glutamate 160, aspartate 179, and aspartate 181 each coordinate Mg(2+). The tract at residues 122 to 253 (DVEKFSRRTV…NTALKLIRDH (132 aa)) is I-domain. Glutamate 158 is a binding site for DNA. Residues glycine 231 and aspartate 233 each contribute to the DNA site. Aspartate 233 lines the Mg(2+) pocket. The interval 341-349 (QQSRLEGFF) is interaction with PCNA. Over residues 357-389 (QEKATLKRKHEEKLELQKKKKKEEAKAKKEAKS) the composition is skewed to basic and acidic residues. A disordered region spans residues 357–395 (QEKATLKRKHEEKLELQKKKKKEEAKAKKEAKSKPRGAV).

It belongs to the XPG/RAD2 endonuclease family. FEN1 subfamily. Interacts with PCNA. Three molecules of FEN1 bind to one PCNA trimer with each molecule binding to one PCNA monomer. PCNA stimulates the nuclease activity without altering cleavage specificity. It depends on Mg(2+) as a cofactor. In terms of processing, phosphorylated. Phosphorylation upon DNA damage induces relocalization to the nuclear plasma.

The protein resides in the nucleus. It localises to the nucleolus. The protein localises to the nucleoplasm. It is found in the mitochondrion. Structure-specific nuclease with 5'-flap endonuclease and 5'-3' exonuclease activities involved in DNA replication and repair. During DNA replication, cleaves the 5'-overhanging flap structure that is generated by displacement synthesis when DNA polymerase encounters the 5'-end of a downstream Okazaki fragment. It enters the flap from the 5'-end and then tracks to cleave the flap base, leaving a nick for ligation. Also involved in the long patch base excision repair (LP-BER) pathway, by cleaving within the apurinic/apyrimidinic (AP) site-terminated flap. Acts as a genome stabilization factor that prevents flaps from equilibrating into structures that lead to duplications and deletions. Also possesses 5'-3' exonuclease activity on nicked or gapped double-stranded DNA, and exhibits RNase H activity. Also involved in replication and repair of rDNA and in repairing mitochondrial DNA. In Ajellomyces dermatitidis (strain ER-3 / ATCC MYA-2586) (Blastomyces dermatitidis), this protein is Flap endonuclease 1.